A 428-amino-acid polypeptide reads, in one-letter code: Protein CLP1 homolog (428 aa).

Residues Glu22, Lys63, and 127 to 132 contribute to the ATP site; that span reads DVGKST.

Belongs to the Clp1 family. Clp1 subfamily.

The protein resides in the nucleus. Functionally, required for endonucleolytic cleavage during polyadenylation-dependent pre-mRNA 3'-end formation. The polypeptide is Protein CLP1 homolog (Nematostella vectensis (Starlet sea anemone)).